Consider the following 249-residue polypeptide: Zinc finger AN1 and C2H2 domain-containing stress-associated protein 13 (249 aa).

2 AN1-type zinc fingers span residues P7–V55 and A95–S145. Zn(2+)-binding residues include C13, C18, C28, C31, C36, H39, H45, C47, C101, C106, C118, C121, C126, H129, H135, and C137. The interval F194 to N213 is disordered. Positions N201–G210 are enriched in basic and acidic residues. A C2H2-type zinc finger spans residues D220 to H243.

In terms of biological role, may be involved in environmental stress response. In Arabidopsis thaliana (Mouse-ear cress), this protein is Zinc finger AN1 and C2H2 domain-containing stress-associated protein 13 (SAP13).